The following is a 183-amino-acid chain: Peptidyl-tRNA hydrolase (183 aa).

TRNA is bound at residue tyrosine 14. The Proton acceptor role is filled by histidine 19. TRNA-binding residues include tyrosine 64, asparagine 66, and asparagine 112.

It belongs to the PTH family. Monomer.

The protein resides in the cytoplasm. It carries out the reaction an N-acyl-L-alpha-aminoacyl-tRNA + H2O = an N-acyl-L-amino acid + a tRNA + H(+). Functionally, hydrolyzes ribosome-free peptidyl-tRNAs (with 1 or more amino acids incorporated), which drop off the ribosome during protein synthesis, or as a result of ribosome stalling. Catalyzes the release of premature peptidyl moieties from peptidyl-tRNA molecules trapped in stalled 50S ribosomal subunits, and thus maintains levels of free tRNAs and 50S ribosomes. The chain is Peptidyl-tRNA hydrolase from Anaplasma phagocytophilum (strain HZ).